Reading from the N-terminus, the 298-residue chain is 3'-5' exonuclease crn-4 (298 aa).

One can recognise an Exonuclease domain in the interval 12–192 (LILDFETTSD…DDCLNIATIL (181 aa)). Aspartate 15, glutamate 17, and aspartate 184 together coordinate Mg(2+). Residues cysteine 210, cysteine 260, cysteine 263, and cysteine 270 each contribute to the Zn(2+) site.

Homodimer (via C-terminus). Interacts with crn-5; interaction promotes the DNase activity of crn-4. Interacts with cps-6, crn-1 and cyn-13. Requires Mg(2+) as cofactor.

Exonuclease activity is inhibited in vitro by pontacyl violet 6R (PV6R), p-chloromercuriphenyl sulfonate (PCMPS), 5,5'-dithiobis(2-nitrobenzoic acid) (DTNB), aurintricarboxylic acid (ATA), 2-morpholin-4-ylethanesulfonate (MES), 4-[(4,6-dichloro-1,3,5-triazin-2-yl)amino]-2-(3-hydroxy-6-oxoxanthen-9-yl)benzoic acid (DR396) and fmoc-d-Cha-OH (FDCO). Interaction with ssRNA is reduced in vitro by PV6R. Its function is as follows. Possesses 3'-&gt;5' exoribonuclease activity in digestion of DNA and RNA. Cleaves nucleic acid substrates with efficiencies in the following order: single-stranded RNA (ssRNA) &gt; double-stranded DNA (dsDNA) &gt; single-stranded DNA (ssDNA). Involved in apoptotic DNA degradation. The sequence is that of 3'-5' exonuclease crn-4 (crn-4) from Caenorhabditis elegans.